A 184-amino-acid polypeptide reads, in one-letter code: ATP synthase subunit b, chloroplastic (184 aa).

A helical transmembrane segment spans residues 27–49; it reads LATNPINLSVVLGVLVFFGKGVL.

Belongs to the ATPase B chain family. In terms of assembly, F-type ATPases have 2 components, F(1) - the catalytic core - and F(0) - the membrane proton channel. F(1) has five subunits: alpha(3), beta(3), gamma(1), delta(1), epsilon(1). F(0) has four main subunits: a(1), b(1), b'(1) and c(10-14). The alpha and beta chains form an alternating ring which encloses part of the gamma chain. F(1) is attached to F(0) by a central stalk formed by the gamma and epsilon chains, while a peripheral stalk is formed by the delta, b and b' chains.

Its subcellular location is the plastid. It localises to the chloroplast thylakoid membrane. Functionally, f(1)F(0) ATP synthase produces ATP from ADP in the presence of a proton or sodium gradient. F-type ATPases consist of two structural domains, F(1) containing the extramembraneous catalytic core and F(0) containing the membrane proton channel, linked together by a central stalk and a peripheral stalk. During catalysis, ATP synthesis in the catalytic domain of F(1) is coupled via a rotary mechanism of the central stalk subunits to proton translocation. Its function is as follows. Component of the F(0) channel, it forms part of the peripheral stalk, linking F(1) to F(0). The chain is ATP synthase subunit b, chloroplastic from Phaseolus vulgaris (Kidney bean).